Consider the following 798-residue polypeptide: Nuclear cap-binding protein subunit 1 (798 aa).

The MIF4G domain occupies 28–241; that stretch reads EKKLQGVIGK…SLSAQIEALR (214 aa). Residues 663 to 686 are disordered; sequence NKIKEEDDEESDIKMDEDETKEEK. A compositionally biased stretch (acidic residues) spans 668–682; that stretch reads EDDEESDIKMDEDET.

It belongs to the NCBP1 family. In terms of assembly, component of the nuclear cap-binding complex (CBC), a heterodimer composed of ncbp-1 and ncbp-1 that interacts with m7GpppG-capped RNA.

The protein localises to the nucleus. In terms of biological role, component of the cap-binding complex (CBC), which binds cotranscriptionally to the 5'-cap of pre-mRNAs and is involved in various processes such as pre-mRNA splicing and RNA-mediated gene silencing (RNAi). The CBC complex is involved in miRNA-mediated RNA interference and is required for primary microRNAs (miRNAs) processing. In the CBC complex, ncbp-1 does not bind directly capped RNAs (m7GpppG-capped RNA) but is required to stabilize the movement of the N-terminal loop of ncbp-2 and lock the CBC into a high affinity cap-binding state with the cap structure. The polypeptide is Nuclear cap-binding protein subunit 1 (ncbp-1) (Caenorhabditis elegans).